An 87-amino-acid polypeptide reads, in one-letter code: U15-lycotoxin-Ls1f (87 aa).

Positions 1 to 20 (MNSKIFAVLLLLGLLSCVLS) are cleaved as a signal peptide. The region spanning 21 to 66 (DQYCPKSSITACKKMNIRNDCCKDDDCTGGSWCCATPCGNFCKYPT) is the WAP domain. Disulfide bonds link Cys-24-Cys-54, Cys-32-Cys-58, Cys-41-Cys-53, Cys-42-Cys-80, and Cys-47-Cys-62.

The protein belongs to the venom protein 11 family. 01 (wap-1) subfamily. Post-translationally, contains 5 disulfide bonds. Expressed by the venom gland.

The protein localises to the secreted. Its function is as follows. Has antibacterial activity. The protein is U15-lycotoxin-Ls1f of Lycosa singoriensis (Wolf spider).